Here is a 515-residue protein sequence, read N- to C-terminus: FAD-dependent oxidoreductase domain-containing protein 1 homolog (515 aa).

The segment at 18–37 (AGATSNGSGSSGGDKSGEDL) is disordered. The helical transmembrane segment at 100–116 (VLIIGGGGVGSSIAYWL) threads the bilayer.

In terms of assembly, associates with mitochondrial complex I assembly intermediates during its biogenesis. The cofactor is FAD.

Its subcellular location is the mitochondrion inner membrane. Involved in the assembly of the mitochondrial membrane respiratory chain NADH dehydrogenase (Complex I). The sequence is that of FAD-dependent oxidoreductase domain-containing protein 1 homolog from Drosophila melanogaster (Fruit fly).